Here is a 273-residue protein sequence, read N- to C-terminus: 2,3,4,5-tetrahydropyridine-2,6-dicarboxylate N-succinyltransferase (273 aa).

The substrate site is built by Arg-105 and Asp-142.

The protein belongs to the transferase hexapeptide repeat family. As to quaternary structure, homotrimer.

Its subcellular location is the cytoplasm. It carries out the reaction (S)-2,3,4,5-tetrahydrodipicolinate + succinyl-CoA + H2O = (S)-2-succinylamino-6-oxoheptanedioate + CoA. The protein operates within amino-acid biosynthesis; L-lysine biosynthesis via DAP pathway; LL-2,6-diaminopimelate from (S)-tetrahydrodipicolinate (succinylase route): step 1/3. This is 2,3,4,5-tetrahydropyridine-2,6-dicarboxylate N-succinyltransferase from Bordetella bronchiseptica (strain ATCC BAA-588 / NCTC 13252 / RB50) (Alcaligenes bronchisepticus).